The chain runs to 1166 residues: Zinc finger CCHC domain-containing protein 2 (1166 aa).

Disordered regions lie at residues 1–85 (MLRM…GGHA), 205–240 (RAEGSRGSVEDEPSGDGEQDAEKDGPGPEGSGCAKL), 550–668 (SSAD…ARFS), and 904–982 (PASF…ISAV). The span at 43–64 (PPPPPTGLPRGPPPPPSPPRGL) shows a compositional bias: pro residues. Low complexity predominate over residues 65-76 (EPPVASGPTAGA). Acidic residues predominate over residues 214–223 (EDEPSGDGEQ). A compositionally biased stretch (basic and acidic residues) spans 572–587 (PQVEKEKVKKTEDRLN). Positions 624–633 (SSESYSSPSS) are enriched in low complexity. Over residues 634-653 (PRHDGRESLESEEEKDRDSD) the composition is skewed to basic and acidic residues. Positions 919-947 (LPTQNSSALNAATSAQPASTGISPSQSTV) are enriched in polar residues. Over residues 949-963 (PAVPTHTPGPAPSPS) the composition is skewed to pro residues. A compositionally biased stretch (polar residues) spans 964 to 982 (PALTHSTAQSDSTSYISAV). The CCHC-type zinc-finger motif lies at 1119-1136 (VSCYNCGVSGHYAQDCKQ).

The chain is Zinc finger CCHC domain-containing protein 2 (Zcchc2) from Mus musculus (Mouse).